The sequence spans 443 residues: SAM50-like protein CG7639 (443 aa).

A POTRA domain is found at 23–101 (ARVDRVNVSG…QGYEVTFKGN (79 aa)).

The protein belongs to the SAM50/omp85 family. In terms of assembly, associates with the mitochondrial contact site and cristae organizing system (MICOS) complex (also known as MINOS or MitOS complex).

The protein resides in the mitochondrion outer membrane. In terms of biological role, may play a role in the maintenance of the structure of mitochondrial cristae. This Drosophila melanogaster (Fruit fly) protein is SAM50-like protein CG7639.